The sequence spans 68 residues: UPF0352 protein CPS_2611 (68 aa).

Belongs to the UPF0352 family.

The chain is UPF0352 protein CPS_2611 from Colwellia psychrerythraea (strain 34H / ATCC BAA-681) (Vibrio psychroerythus).